Reading from the N-terminus, the 144-residue chain is Protein MIX23 (144 aa).

At alanine 2 the chain carries N-acetylalanine. The stretch at 82–120 forms a coiled coil; it reads VKSLREEREKNLDDLTLLKRLRKEQTKLKWMQSELNVEE. At lysine 100 the chain carries N6-acetyllysine.

It belongs to the MIX23 family.

The polypeptide is Protein MIX23 (Mus musculus (Mouse)).